A 388-amino-acid chain; its full sequence is Formate-dependent phosphoribosylglycinamide formyltransferase (388 aa).

Residues Glu-20 to Leu-21 and Glu-80 contribute to the N(1)-(5-phospho-beta-D-ribosyl)glycinamide site. Residues Arg-112, Lys-153, Ser-158–Gln-163, Glu-193–Ile-196, and Glu-201 each bind ATP. The ATP-grasp domain maps to Arg-117–Leu-306. Mg(2+)-binding residues include Glu-265 and Glu-277. Residues Asp-284, Lys-352, and Arg-359–Arg-360 contribute to the N(1)-(5-phospho-beta-D-ribosyl)glycinamide site.

This sequence belongs to the PurK/PurT family. In terms of assembly, homodimer.

It catalyses the reaction N(1)-(5-phospho-beta-D-ribosyl)glycinamide + formate + ATP = N(2)-formyl-N(1)-(5-phospho-beta-D-ribosyl)glycinamide + ADP + phosphate + H(+). Its pathway is purine metabolism; IMP biosynthesis via de novo pathway; N(2)-formyl-N(1)-(5-phospho-D-ribosyl)glycinamide from N(1)-(5-phospho-D-ribosyl)glycinamide (formate route): step 1/1. Its function is as follows. Involved in the de novo purine biosynthesis. Catalyzes the transfer of formate to 5-phospho-ribosyl-glycinamide (GAR), producing 5-phospho-ribosyl-N-formylglycinamide (FGAR). Formate is provided by PurU via hydrolysis of 10-formyl-tetrahydrofolate. This Methanococcus maripaludis (strain DSM 14266 / JCM 13030 / NBRC 101832 / S2 / LL) protein is Formate-dependent phosphoribosylglycinamide formyltransferase.